The primary structure comprises 294 residues: Metallophosphoesterase MPPED2 (294 aa).

Residues D65, H67, D86, N117, and H213 each coordinate Mn(2+). Residue 117–118 coordinates GMP; that stretch reads NH. Residues 225–226 and 252–255 each bind GMP; these read KE and GIHE. H254 is a binding site for Mn(2+).

It belongs to the UPF0046 family. Homodimer. The cofactor is Mn(2+). Co(2+) is required as a cofactor.

Its activity is regulated as follows. Inhibited by nmolar levels of AMP and GMP. Displays low metallophosphoesterase activity (in vitro). May play a role in the development of the nervous system. This is Metallophosphoesterase MPPED2 (Mpped2) from Mus musculus (Mouse).